Reading from the N-terminus, the 463-residue chain is Abscisic acid 8'-hydroxylase 3 (463 aa).

Residues 6-26 (LFLTLSAAALFLCLLRFIAGV) traverse the membrane as a helical segment. Residue C411 participates in heme binding.

Belongs to the cytochrome P450 family. Heme serves as cofactor. Mainly expressed in flower buds, flowers, rosette leaves and roots. Lower expression in mature siliques and inflorescence stems. Not expressed in dry seeds.

Its subcellular location is the membrane. It catalyses the reaction 2-cis-(+)-abscisate + reduced [NADPH--hemoprotein reductase] + O2 = (+)-8'-hydroxyabscisate + oxidized [NADPH--hemoprotein reductase] + H2O + H(+). It participates in plant hormone degradation; abscisic acid degradation. With respect to regulation, inhibited by tetcyclcis, but not by metyrapone. Involved in the oxidative degradation of abscisic acid, but not in the isomerization of the produced 8'-hydroxyabscisic acid (8'-OH-ABA) to (-)-phaseic acid (PA). Involved in the control of postgermination growth. In Arabidopsis thaliana (Mouse-ear cress), this protein is Abscisic acid 8'-hydroxylase 3 (CYP707A3).